We begin with the raw amino-acid sequence, 239 residues long: Small ribosomal subunit protein uS3c (239 aa).

Residues 43 to 139 (IKNYIQKNRK…RLNIGIEKVK (97 aa)) enclose the KH type-2 domain.

Belongs to the universal ribosomal protein uS3 family. Part of the 30S ribosomal subunit.

Its subcellular location is the plastid. The protein resides in the chloroplast. In Oryza nivara (Indian wild rice), this protein is Small ribosomal subunit protein uS3c (rps3).